Consider the following 446-residue polypeptide: Phosphoglucosamine mutase (446 aa).

Residue serine 102 is the Phosphoserine intermediate of the active site. Positions 102, 241, 243, and 245 each coordinate Mg(2+). Serine 102 is modified (phosphoserine).

This sequence belongs to the phosphohexose mutase family. Mg(2+) serves as cofactor. Post-translationally, activated by phosphorylation.

It catalyses the reaction alpha-D-glucosamine 1-phosphate = D-glucosamine 6-phosphate. Its function is as follows. Catalyzes the conversion of glucosamine-6-phosphate to glucosamine-1-phosphate. This Idiomarina loihiensis (strain ATCC BAA-735 / DSM 15497 / L2-TR) protein is Phosphoglucosamine mutase.